Reading from the N-terminus, the 897-residue chain is Translation initiation factor IF-2 (897 aa).

2 disordered regions span residues 69-88 (RKTK…KEVQ) and 95-304 (RTYV…NAMK). The span at 101–161 (SALEDEQRQA…EEKARIEAQQ (61 aa)) shows a compositional bias: basic and acidic residues. A compositionally biased stretch (low complexity) spans 162 to 179 (KARQAQQPAKAAGSTAQQ). 4 stretches are compositionally biased toward basic and acidic residues: residues 180 to 196 (EAEK…KRQQ), 203 to 217 (KAEE…EARV), 226 to 239 (WAEE…ESSD), and 277 to 286 (RREDDRDARN). Residues 287–296 (PRARKGKRGK) are compositionally biased toward basic residues. In terms of domain architecture, tr-type G spans 397–566 (PRAPVVTIMG…LIQSEVLELK (170 aa)). The interval 406-413 (GHVDHGKT) is G1. 406–413 (GHVDHGKT) serves as a coordination point for GTP. Residues 431–435 (GITQH) form a G2 region. The segment at 452–455 (DTPG) is G3. Residues 452-456 (DTPGH) and 506-509 (NKID) contribute to the GTP site. Residues 506–509 (NKID) form a G4 region. The G5 stretch occupies residues 542 to 544 (SAK).

The protein belongs to the TRAFAC class translation factor GTPase superfamily. Classic translation factor GTPase family. IF-2 subfamily.

It is found in the cytoplasm. Functionally, one of the essential components for the initiation of protein synthesis. Protects formylmethionyl-tRNA from spontaneous hydrolysis and promotes its binding to the 30S ribosomal subunits. Also involved in the hydrolysis of GTP during the formation of the 70S ribosomal complex. The chain is Translation initiation factor IF-2 from Aeromonas hydrophila subsp. hydrophila (strain ATCC 7966 / DSM 30187 / BCRC 13018 / CCUG 14551 / JCM 1027 / KCTC 2358 / NCIMB 9240 / NCTC 8049).